Here is a 98-residue protein sequence, read N- to C-terminus: Ribonuclease P protein component 4 (98 aa).

The Zn(2+) site is built by C62, C65, C85, and C88.

It belongs to the eukaryotic/archaeal RNase P protein component 4 family. In terms of assembly, consists of a catalytic RNA component and at least 4-5 protein subunits. Zn(2+) is required as a cofactor.

It is found in the cytoplasm. The enzyme catalyses Endonucleolytic cleavage of RNA, removing 5'-extranucleotides from tRNA precursor.. Part of ribonuclease P, a protein complex that generates mature tRNA molecules by cleaving their 5'-ends. The polypeptide is Ribonuclease P protein component 4 (Thermoplasma volcanium (strain ATCC 51530 / DSM 4299 / JCM 9571 / NBRC 15438 / GSS1)).